The following is a 389-amino-acid chain: MTQGRLFYPLAVLQDRHFRSKYPNYNESRELKTWSVVSKRFPAWEQKLVSMLLDNKYAESIIFINSDVSMSSVGVFKRTKLLIRTHILNSHYKAVIDFESRLNTQPITSEPTELADFIECKLLLILNWFLRGEYHQCLQRFIQLIIDIPNLVELMVTLPKDDIFISNETMFYIITVSALVSIPLDNLDTFIHLEELEQFHKHFDVLAGKGKLIINSKFMKFFDWWHNDMERLCKQDYFLEKKWDIISKTMRQKMYAFYLRIATKIQISYLSERVGISREIVTQEITQLISEACLNFQIHDDLILYQKFDPQMALNDLMMTEDITLDNKLSQLRRQNHNLRVIVDEHLALRKSRIQRRSKASDEEPMNEEEVFALSENELCNETADTFND.

The 170-residue stretch at 143 to 312 (QLIIDIPNLV…ILYQKFDPQM (170 aa)) folds into the PCI domain.

In terms of assembly, component of a COP9 signalosome-like (CSN) complex.

The protein localises to the cytoplasm. The protein resides in the nucleus. Functionally, component of the COP9 signalosome (CSN) complex that acts as an regulator of the ubiquitin (Ubl) conjugation pathway by mediating the deneddylation of the cullin subunit of SCF-type E3 ubiquitin-protein ligase complexes The CSN complex is involved in the regulation of the mating pheromone response. PCI8 may also be involved in transcriptional and translational control. The protein is COP9 signalosome complex subunit 11 (PCI8) of Kluyveromyces lactis (strain ATCC 8585 / CBS 2359 / DSM 70799 / NBRC 1267 / NRRL Y-1140 / WM37) (Yeast).